Consider the following 66-residue polypeptide: Large ribosomal subunit protein bL31 (66 aa).

Zn(2+) contacts are provided by Cys16, Cys18, Cys36, and Cys39.

It belongs to the bacterial ribosomal protein bL31 family. Type A subfamily. Part of the 50S ribosomal subunit. Zn(2+) serves as cofactor.

Binds the 23S rRNA. The sequence is that of Large ribosomal subunit protein bL31 from Priestia megaterium (Bacillus megaterium).